Reading from the N-terminus, the 80-residue chain is Protein FAM229B (80 aa).

The interval 1 to 44 is disordered; sequence MPFRFGTQPRRFPVEGGDSSIGLEPGLSSSAACNGKEMSPTRQL.

Belongs to the FAM229 family.

This Macaca fascicularis (Crab-eating macaque) protein is Protein FAM229B (FAM229B).